The following is a 490-amino-acid chain: Protein nucleotidyltransferase YdiU (490 aa).

ATP contacts are provided by Gly-86, Gly-88, Arg-89, Lys-109, Asp-121, Gly-122, Arg-172, and Arg-179. Asp-248 serves as the catalytic Proton acceptor. Residues Asn-249 and Asp-258 each coordinate Mg(2+). Asp-258 serves as a coordination point for ATP.

This sequence belongs to the SELO family. It depends on Mg(2+) as a cofactor. Requires Mn(2+) as cofactor.

It carries out the reaction L-seryl-[protein] + ATP = 3-O-(5'-adenylyl)-L-seryl-[protein] + diphosphate. The enzyme catalyses L-threonyl-[protein] + ATP = 3-O-(5'-adenylyl)-L-threonyl-[protein] + diphosphate. The catalysed reaction is L-tyrosyl-[protein] + ATP = O-(5'-adenylyl)-L-tyrosyl-[protein] + diphosphate. It catalyses the reaction L-histidyl-[protein] + UTP = N(tele)-(5'-uridylyl)-L-histidyl-[protein] + diphosphate. It carries out the reaction L-seryl-[protein] + UTP = O-(5'-uridylyl)-L-seryl-[protein] + diphosphate. The enzyme catalyses L-tyrosyl-[protein] + UTP = O-(5'-uridylyl)-L-tyrosyl-[protein] + diphosphate. Its function is as follows. Nucleotidyltransferase involved in the post-translational modification of proteins. It can catalyze the addition of adenosine monophosphate (AMP) or uridine monophosphate (UMP) to a protein, resulting in modifications known as AMPylation and UMPylation. This is Protein nucleotidyltransferase YdiU from Rhizobium meliloti (strain 1021) (Ensifer meliloti).